The chain runs to 104 residues: MAAKIRKGDKVVVLTGRDKGRTGEVFEVRPDAGTALVRGINMVKRHQKQTQAQEGGIISKEAPIQLSNIAYVGKDGKPTRVGFKILADGKKVRIAKSSGAEIDG.

The protein belongs to the universal ribosomal protein uL24 family. In terms of assembly, part of the 50S ribosomal subunit.

One of two assembly initiator proteins, it binds directly to the 5'-end of the 23S rRNA, where it nucleates assembly of the 50S subunit. Its function is as follows. One of the proteins that surrounds the polypeptide exit tunnel on the outside of the subunit. This Bradyrhizobium diazoefficiens (strain JCM 10833 / BCRC 13528 / IAM 13628 / NBRC 14792 / USDA 110) protein is Large ribosomal subunit protein uL24.